Consider the following 77-residue polypeptide: Defensin-like protein 1 (77 aa).

A signal peptide spans 1-30 (MKLSVRFISAALLLFMVFIATGMGPVTVEA). 4 disulfides stabilise this stretch: Cys33/Cys77, Cys44/Cys64, Cys50/Cys71, and Cys54/Cys73.

This sequence belongs to the DEFL family. In terms of tissue distribution, expressed in the whole plant except roots.

The protein localises to the secreted. Its function is as follows. Confers broad-spectrum resistance to pathogens. This is Defensin-like protein 1 (PDF2.3) from Arabidopsis thaliana (Mouse-ear cress).